The following is a 570-amino-acid chain: Periplasmic trehalase (570 aa).

The first 34 residues, 1–34, serve as a signal peptide directing secretion; that stretch reads MIPPEIRRSVLLQKAIKLALAGTLLTFASFSATA. Substrate is bound by residues arginine 159, 166–167, asparagine 203, 212–214, 284–286, and glycine 317; these read WD, RSQ, and RPE. Catalysis depends on proton donor/acceptor residues aspartate 319 and glutamate 503. Glutamate 518 provides a ligand contact to substrate. Residues 544 to 570 are disordered; that stretch reads KPCDSVPSTRPASLSATPTKTPSAATQ. The segment covering 554 to 570 has biased composition (low complexity); the sequence is PASLSATPTKTPSAATQ.

This sequence belongs to the glycosyl hydrolase 37 family. As to quaternary structure, monomer.

Its subcellular location is the periplasm. It catalyses the reaction alpha,alpha-trehalose + H2O = alpha-D-glucose + beta-D-glucose. Functionally, provides the cells with the ability to utilize trehalose at high osmolarity by splitting it into glucose molecules that can subsequently be taken up by the phosphotransferase-mediated uptake system. The protein is Periplasmic trehalase of Salmonella choleraesuis (strain SC-B67).